A 355-amino-acid polypeptide reads, in one-letter code: Probable butyrate kinase (355 aa).

This sequence belongs to the acetokinase family.

It is found in the cytoplasm. It catalyses the reaction butanoate + ATP = butanoyl phosphate + ADP. This chain is Probable butyrate kinase, found in Listeria monocytogenes serotype 4b (strain CLIP80459).